We begin with the raw amino-acid sequence, 144 residues long: MRLNTISSAPGAKQAEKRVGRGIGSGWGKTCGRGHKGQKSRSGGFHKVGFEGGQMPLQRRVPKFGFSSRKARFRVEVRLDQLTKVNTDTVDIAALVKARLIPKWAKRVKVIASGKLDKPVSLQGIMVSAGARRAIEAAGGRIGE.

A disordered region spans residues 1–52 (MRLNTISSAPGAKQAEKRVGRGIGSGWGKTCGRGHKGQKSRSGGFHKVGFEG). Over residues 21-31 (RGIGSGWGKTC) the composition is skewed to gly residues.

The protein belongs to the universal ribosomal protein uL15 family. Part of the 50S ribosomal subunit.

Its function is as follows. Binds to the 23S rRNA. The protein is Large ribosomal subunit protein uL15 of Nitrosococcus oceani (strain ATCC 19707 / BCRC 17464 / JCM 30415 / NCIMB 11848 / C-107).